Consider the following 185-residue polypeptide: Probable chorismate pyruvate-lyase 1 (185 aa).

Substrate is bound by residues arginine 68, leucine 106, and glutamate 164.

This sequence belongs to the UbiC family.

The protein resides in the cytoplasm. The enzyme catalyses chorismate = 4-hydroxybenzoate + pyruvate. It functions in the pathway cofactor biosynthesis; ubiquinone biosynthesis. Removes the pyruvyl group from chorismate, with concomitant aromatization of the ring, to provide 4-hydroxybenzoate (4HB) for the ubiquinone pathway. The polypeptide is Probable chorismate pyruvate-lyase 1 (Pseudomonas entomophila (strain L48)).